A 61-amino-acid chain; its full sequence is Large ribosomal subunit protein uL30 (61 aa).

It belongs to the universal ribosomal protein uL30 family. Part of the 50S ribosomal subunit.

The polypeptide is Large ribosomal subunit protein uL30 (Nitrosomonas eutropha (strain DSM 101675 / C91 / Nm57)).